A 227-amino-acid chain; its full sequence is Agamous-like MADS-box protein AGL17 (227 aa).

In terms of domain architecture, MADS-box spans 3 to 57; it reads RGKIVIQKIDDSTSRQVTFSKRRKGLIKKAKELAILCDAEVCLIIFSNTDKLYDF. The K-box domain occupies 86 to 176; sequence VKFWQREAET…SRKVQRIHQE (91 aa).

Preferentially expressed in roots.

The protein localises to the nucleus. Functionally, probable transcription factor. The chain is Agamous-like MADS-box protein AGL17 (AGL17) from Arabidopsis thaliana (Mouse-ear cress).